The following is a 419-amino-acid chain: Serine hydroxymethyltransferase (419 aa).

(6S)-5,6,7,8-tetrahydrofolate contacts are provided by residues L121 and G125–L127. K229 is subject to N6-(pyridoxal phosphate)lysine. Residue S354–F356 coordinates (6S)-5,6,7,8-tetrahydrofolate.

The protein belongs to the SHMT family. As to quaternary structure, homodimer. Pyridoxal 5'-phosphate is required as a cofactor.

It localises to the cytoplasm. It carries out the reaction (6R)-5,10-methylene-5,6,7,8-tetrahydrofolate + glycine + H2O = (6S)-5,6,7,8-tetrahydrofolate + L-serine. It participates in one-carbon metabolism; tetrahydrofolate interconversion. It functions in the pathway amino-acid biosynthesis; glycine biosynthesis; glycine from L-serine: step 1/1. Functionally, catalyzes the reversible interconversion of serine and glycine with tetrahydrofolate (THF) serving as the one-carbon carrier. This reaction serves as the major source of one-carbon groups required for the biosynthesis of purines, thymidylate, methionine, and other important biomolecules. Also exhibits THF-independent aldolase activity toward beta-hydroxyamino acids, producing glycine and aldehydes, via a retro-aldol mechanism. The polypeptide is Serine hydroxymethyltransferase (Coxiella burnetii (strain CbuK_Q154) (Coxiella burnetii (strain Q154))).